The chain runs to 225 residues: Thymidylate kinase (225 aa).

Residue 10–17 (GVEGGGKT) coordinates ATP.

Belongs to the thymidylate kinase family.

The enzyme catalyses dTMP + ATP = dTDP + ADP. Functionally, phosphorylation of dTMP to form dTDP in both de novo and salvage pathways of dTTP synthesis. The chain is Thymidylate kinase from Trichodesmium erythraeum (strain IMS101).